Consider the following 94-residue polypeptide: Large ribosomal subunit protein uL23cz (94 aa).

Belongs to the universal ribosomal protein uL23 family. In terms of assembly, part of the 50S ribosomal subunit.

Its subcellular location is the plastid. The protein resides in the chloroplast. Functionally, binds to 23S rRNA. This is Large ribosomal subunit protein uL23cz (rpl23-A) from Agrostis stolonifera (Creeping bentgrass).